Consider the following 33-residue polypeptide: Brevinin-2DYd (33 aa).

A disulfide bridge connects residues cysteine 27 and cysteine 33.

Expressed by the skin glands.

The protein resides in the secreted. Functionally, antimicrobial peptide. A mixture of Brevinin-2DYc/2DYd is active against the Gram-positive bacterium S.aureus (MIC=15 uM) and the Gram-negative bacterium E.coli (MIC=15 uM). This is Brevinin-2DYd from Rana dybowskii (Dybovsky's frog).